A 466-amino-acid chain; its full sequence is Argininosuccinate lyase (466 aa).

This sequence belongs to the lyase 1 family. Argininosuccinate lyase subfamily.

The protein resides in the cytoplasm. It catalyses the reaction 2-(N(omega)-L-arginino)succinate = fumarate + L-arginine. The protein operates within amino-acid biosynthesis; L-arginine biosynthesis; L-arginine from L-ornithine and carbamoyl phosphate: step 3/3. This chain is Argininosuccinate lyase, found in Brucella anthropi (strain ATCC 49188 / DSM 6882 / CCUG 24695 / JCM 21032 / LMG 3331 / NBRC 15819 / NCTC 12168 / Alc 37) (Ochrobactrum anthropi).